Reading from the N-terminus, the 88-residue chain is Small ribosomal subunit protein bS20 (88 aa).

This sequence belongs to the bacterial ribosomal protein bS20 family.

In terms of biological role, binds directly to 16S ribosomal RNA. The polypeptide is Small ribosomal subunit protein bS20 (Legionella pneumophila (strain Paris)).